Here is a 169-residue protein sequence, read N- to C-terminus: Transmembrane protein 89 (169 aa).

An N-terminal signal peptide occupies residues 1 to 22; that stretch reads MLYTLLLVPSLFLLVMPVPSQG. At 23–75 the chain is on the extracellular side; the sequence is WSRPLWYQVGLDLQPWGCQPNSPDIWGCQPNSLDSCKNSLGCPGYWLGLGGNR. The helical transmembrane segment at 76 to 96 threads the bilayer; that stretch reads IYPVAGVTITTTMLLVVSRVI. Over 97 to 169 the chain is Cytoplasmic; sequence VHRWRAKVAK…QIKGSPPQSG (73 aa).

It is found in the membrane. The chain is Transmembrane protein 89 (Tmem89) from Mus musculus (Mouse).